We begin with the raw amino-acid sequence, 205 residues long: Pyrrolidone-carboxylate peptidase (205 aa).

Active-site residues include E79, C142, and H165.

It belongs to the peptidase C15 family. As to quaternary structure, homotetramer.

It is found in the cytoplasm. The enzyme catalyses Release of an N-terminal pyroglutamyl group from a polypeptide, the second amino acid generally not being Pro.. Functionally, removes 5-oxoproline from various penultimate amino acid residues except L-proline. The sequence is that of Pyrrolidone-carboxylate peptidase from Gloeobacter violaceus (strain ATCC 29082 / PCC 7421).